The chain runs to 314 residues: Putative S-adenosyl-L-methionine-dependent methyltransferase MAP_0256 (314 aa).

S-adenosyl-L-methionine-binding positions include D132 and D161 to L162.

It belongs to the UPF0677 family.

In terms of biological role, exhibits S-adenosyl-L-methionine-dependent methyltransferase activity. The chain is Putative S-adenosyl-L-methionine-dependent methyltransferase MAP_0256 from Mycolicibacterium paratuberculosis (strain ATCC BAA-968 / K-10) (Mycobacterium paratuberculosis).